The following is a 305-amino-acid chain: Putative lipid kinase SAS0691 (305 aa).

The DAGKc domain maps to 3–139; sequence NKYTHGVLFY…YDVIKINNQY (137 aa). ATP contacts are provided by residues Ser44, 74–80, and Thr101; that span reads GDGTVNE. The Mg(2+) site is built by Ser220, Asp223, and Glu225. Glu281 serves as the catalytic Proton acceptor.

Belongs to the diacylglycerol/lipid kinase family. Mg(2+) serves as cofactor.

In terms of biological role, may catalyze the ATP-dependent phosphorylation of lipids other than diacylglycerol (DAG). This Staphylococcus aureus (strain MSSA476) protein is Putative lipid kinase SAS0691.